Consider the following 795-residue polypeptide: Phenylalanine--tRNA ligase beta subunit (795 aa).

Positions 39-148 constitute a tRNA-binding domain; that stretch reads AGEFNGVVVG…ADAPVGKDFR (110 aa). A B5 domain is found at 401-476; sequence PKLNKVQLRR…RIYGYNSIPN (76 aa). Mg(2+)-binding residues include aspartate 454, aspartate 460, glutamate 463, and glutamate 464. Positions 701 to 794 constitute an FDX-ACB domain; the sequence is SKFPANKRDL…LKDRFNAYLR (94 aa).

It belongs to the phenylalanyl-tRNA synthetase beta subunit family. Type 1 subfamily. As to quaternary structure, tetramer of two alpha and two beta subunits. It depends on Mg(2+) as a cofactor.

Its subcellular location is the cytoplasm. The enzyme catalyses tRNA(Phe) + L-phenylalanine + ATP = L-phenylalanyl-tRNA(Phe) + AMP + diphosphate + H(+). The sequence is that of Phenylalanine--tRNA ligase beta subunit from Mannheimia succiniciproducens (strain KCTC 0769BP / MBEL55E).